The chain runs to 308 residues: Mitochondrial import receptor subunit TOM40B (308 aa).

A disordered region spans residues 1–29 (MGNTLGLAPMGTLPRRSPRREEPLPNPGS). Residues 281–308 (PLPVTLALGAFLNHWRNRFHCGFSITVG) are required for mitochondrial targeting.

This sequence belongs to the Tom40 family. Forms part of the preprotein translocase of the outer mitochondrial membrane (TOM complex) containing TOMM22, TOMM40, TOMM40L and TOMM70. Interacts with mitochondrial targeting sequences.

Its subcellular location is the mitochondrion outer membrane. In terms of biological role, potential channel-forming protein implicated in import of protein precursors into mitochondria. In Homo sapiens (Human), this protein is Mitochondrial import receptor subunit TOM40B (TOMM40L).